The sequence spans 616 residues: Chaperone protein HscA (616 aa).

Belongs to the heat shock protein 70 family.

Its function is as follows. Chaperone involved in the maturation of iron-sulfur cluster-containing proteins. Has a low intrinsic ATPase activity which is markedly stimulated by HscB. Involved in the maturation of IscU. In Klebsiella pneumoniae subsp. pneumoniae (strain ATCC 700721 / MGH 78578), this protein is Chaperone protein HscA.